The sequence spans 223 residues: Global nitrogen regulator (223 aa).

Residues 143–216 (RDMGSRLVSF…KKKITVHKPV (74 aa)) enclose the HTH crp-type domain. A DNA-binding region (H-T-H motif) is located at residues 176–195 (HQAIAEAIGSTRVTVTRLLG).

Its function is as follows. Required for full expression of proteins subject to ammonium repression. Transcriptional activator of genes subject to nitrogen control. In terms of biological role, has affinity for the xisA upstream region. Binds to a 66 bp region containing three repeats of the consensus recognition sequence 5'-ACATT-3'. This Nostoc sp. (strain PCC 7120 / SAG 25.82 / UTEX 2576) protein is Global nitrogen regulator (ntcA).